The chain runs to 164 residues: Diphosphoinositol polyphosphate phosphohydrolase 3-alpha (164 aa).

Substrate contacts are provided by residues Arg9, Lys17 to Arg19, and Ser38 to Arg40. The Nudix hydrolase domain maps to Lys17–Lys144. Residues Gly49 and Glu65 each coordinate Mg(2+). The short motif at Gly50–Gly71 is the Nudix box element. The active-site Proton acceptor is the Glu68. A Mg(2+)-binding site is contributed by Glu69. Substrate is bound by residues Arg89 to His91, Arg115, and Lys133. A disordered region spans residues Lys144 to Pro164.

The protein belongs to the Nudix hydrolase family. DIPP subfamily. It depends on Mg(2+) as a cofactor. Mn(2+) is required as a cofactor. As to expression, mainly expressed in testis, liver kidney and, at lower level, in heart, brain, spleen, lung and skeletal muscle.

The protein resides in the cytoplasm. The enzyme catalyses diphospho-myo-inositol polyphosphate + H2O = myo-inositol polyphosphate + phosphate.. The catalysed reaction is P(1),P(6)-bis(5'-adenosyl) hexaphosphate + H2O = adenosine 5'-pentaphosphate + AMP + 2 H(+). It catalyses the reaction P(1),P(5)-bis(5'-adenosyl) pentaphosphate + H2O = adenosine 5'-tetraphosphate + AMP + 2 H(+). In terms of biological role, cleaves a beta-phosphate from the diphosphate groups in PP-InsP5 (diphosphoinositol pentakisphosphate), suggesting that it may play a role in signal transduction. Also able to catalyze the hydrolysis of dinucleoside oligophosphates, with Ap6A and Ap5A being the preferred substrates. The major reaction products are ADP and p4a from Ap6A and ADP and ATP from Ap5A. Also able to hydrolyze 5-phosphoribose 1-diphosphate; however, the relevance of such activity in vivo remains unclear. The sequence is that of Diphosphoinositol polyphosphate phosphohydrolase 3-alpha from Mus musculus (Mouse).